We begin with the raw amino-acid sequence, 508 residues long: UDP-N-acetylmuramyl-tripeptide synthetase (508 aa).

Ser-35 lines the UDP-N-acetyl-alpha-D-muramoyl-L-alanyl-D-glutamate pocket. 118–124 (GTDGKSS) provides a ligand contact to ATP. UDP-N-acetyl-alpha-D-muramoyl-L-alanyl-D-glutamate is bound by residues 163–164 (ST), Thr-190, and Arg-200. The residue at position 232 (Lys-232) is an N6-carboxylysine.

Belongs to the MurCDEF family. MurE subfamily. Post-translationally, carboxylation is probably crucial for Mg(2+) binding and, consequently, for the gamma-phosphate positioning of ATP.

It is found in the cytoplasm. The protein operates within cell wall biogenesis; peptidoglycan biosynthesis. Functionally, catalyzes the addition of an amino acid to the nucleotide precursor UDP-N-acetylmuramoyl-L-alanyl-D-glutamate (UMAG) in the biosynthesis of bacterial cell-wall peptidoglycan. This Borreliella burgdorferi (strain ATCC 35210 / DSM 4680 / CIP 102532 / B31) (Borrelia burgdorferi) protein is UDP-N-acetylmuramyl-tripeptide synthetase.